The following is a 535-amino-acid chain: Hrp65 protein (535 aa).

Residues 1 to 80 (MDVKAEAPNG…GMGPRGPMKN (80 aa)) are disordered. Composition is skewed to low complexity over residues 27–42 (ENMN…QNNN) and 50–64 (NKRN…FQNR). Residues 65-74 (GGKGGPGMGP) are compositionally biased toward gly residues. RRM domains follow at residues 113 to 185 (NRLY…FAPN) and 187 to 268 (TTIR…TFDH). Disordered stretches follow at residues 346-411 (EHET…RRQQ) and 429-535 (QEMN…RRRY). Gly residues predominate over residues 434-459 (QGGGGGGGNGGNGNNQGGGGNQGGGR). The span at 486-502 (GNQYQGNQHYQGNQDQG) shows a compositional bias: low complexity. The span at 521-535 (DRGHRDDFQNKRRRY) shows a compositional bias: basic and acidic residues.

It is found in the cytoplasm. It localises to the cytoskeleton. The protein localises to the nucleus. In terms of biological role, component of nuclear connecting fibers associated with the transport of ribonucleoprotein particles from either the chromosome to the nuclear pore complex or their transient retention in the nucleoplasm. The chain is Hrp65 protein (HRP65) from Chironomus tentans (Midge).